We begin with the raw amino-acid sequence, 226 residues long: UPF0177 protein YbdJ (226 aa).

The next 5 membrane-spanning stretches (helical) occupy residues 16–36 (LLLL…LGIF), 43–63 (FAFN…IVIA), 81–101 (LLFI…AHHL), 169–189 (FAWV…ISLV), and 206–226 (LHSS…FWVF).

Belongs to the UPF0177 family.

The protein localises to the cell membrane. This Lactococcus lactis subsp. lactis (strain IL1403) (Streptococcus lactis) protein is UPF0177 protein YbdJ (ybdJ).